The chain runs to 334 residues: Sterol 4-C-methyltransferase strm-1 (334 aa).

This sequence belongs to the class I-like SAM-binding methyltransferase superfamily. Erg6/SMT family. In terms of tissue distribution, expressed in the pharynx and hypodermal syncytium.

The enzyme catalyses 5alpha-cholest-7-en-3-one + S-adenosyl-L-methionine = 4alpha-methyl-5alpha-cholest-7-en-3-one + S-adenosyl-L-homocysteine + H(+). It functions in the pathway steroid hormone biosynthesis; dafachronic acid biosynthesis. Functionally, catalyzes the methyl transfer from S-adenosyl-methionine to the C-4 of the A-ring sterols such as lathosterone (5alpha-cholest-7-en-3-one) thereby rendering them unsuitable as ligand precursors. May irreversibly shunt sterols away from hormone dafachronic acid production. Dafachronic acids act as ligands and bind directly to the nuclear hormone receptor (NHR) daf-12 suppressing dauer formation and inducing reproductive growth. By reducing the biosynthesis of dafachronic acids, this methyltransferase can regulate dauer larva formation. This Caenorhabditis elegans protein is Sterol 4-C-methyltransferase strm-1 (strm-1).